A 580-amino-acid chain; its full sequence is E3 ubiquitin-protein ligase TRIM45 (580 aa).

Residues 29–98 (CPLCMGLFKA…QIGILCPVCD (70 aa)) form an RING-type zinc finger. B box-type zinc fingers lie at residues 130–176 (GQGL…MVDL) and 186–227 (GKPI…CDFT). Zn(2+) contacts are provided by Cys135, Cys138, Cys158, His162, Cys191, His194, Cys214, and His219. A coiled-coil region spans residues 281 to 335 (SEGYIKAIEEHRDKLLKQLEDIRVQKENSLQLQKAQLEQLLADMRTGVEFTEHLL). The Filamin repeat unit spans residues 394 to 497 (TKEVDPAKCV…VQGSPFTVTV (104 aa)).

Belongs to the TRIM/RBCC family.

It localises to the cytoplasm. The protein localises to the nucleus. The enzyme catalyses S-ubiquitinyl-[E2 ubiquitin-conjugating enzyme]-L-cysteine + [acceptor protein]-L-lysine = [E2 ubiquitin-conjugating enzyme]-L-cysteine + N(6)-ubiquitinyl-[acceptor protein]-L-lysine.. E3 ubiquitin-protein ligase that plays a role in the regulation of inflammatory response. Mechanistically, mediates the 'Lys-48'-linked polyubiquitination of TAB2, a regulatory protein of the kinase TAK1, leading to its degradation via the proteasomal pathway and inhibition of the TLR-mediated inflammatory immune response. May act as a transcriptional repressor in mitogen-activated protein kinase signaling pathway. The chain is E3 ubiquitin-protein ligase TRIM45 (TRIM45) from Bos taurus (Bovine).